Consider the following 144-residue polypeptide: Probable 4-amino-4-deoxy-L-arabinose-phosphoundecaprenol flippase subunit ArnF (144 aa).

Topologically, residues 1 to 6 (MTHRRA) are cytoplasmic. Residues 7–24 (TLCAMASVALVSAAQLGM) traverse the membrane as a helical segment. At 25-56 (RWSMSRLPSPVQWLEMQEHAQLDLSALRVVCA) the chain is on the periplasmic side. The chain crosses the membrane as a helical span at residues 57-77 (SITAYALSMLFWLLALRVLPL). Residues 78–80 (SRA) lie on the Cytoplasmic side of the membrane. The helical transmembrane segment at 81 to 101 (YSLLSISYALVYTLAATLPFF) threads the bilayer. The Periplasmic portion of the chain corresponds to 102-104 (HET). Residues 105-125 (FTVSKTVGVSLIVAGVLTINL) form a helical membrane-spanning segment. Topologically, residues 126-144 (RRLPRPSPQDLSHENQRFR) are cytoplasmic.

It belongs to the ArnF family. Heterodimer of ArnE and ArnF.

It localises to the cell inner membrane. It functions in the pathway bacterial outer membrane biogenesis; lipopolysaccharide biosynthesis. Translocates 4-amino-4-deoxy-L-arabinose-phosphoundecaprenol (alpha-L-Ara4N-phosphoundecaprenol) from the cytoplasmic to the periplasmic side of the inner membrane. In Pseudomonas syringae pv. syringae (strain B728a), this protein is Probable 4-amino-4-deoxy-L-arabinose-phosphoundecaprenol flippase subunit ArnF.